Here is a 121-residue protein sequence, read N- to C-terminus: Small ribosomal subunit protein uS13 (121 aa).

The disordered stretch occupies residues 91–121 (HRRGLPTRGQNTKNNARTRKGPVKTVANKKK). Positions 106 to 121 (ARTRKGPVKTVANKKK) are enriched in basic residues.

The protein belongs to the universal ribosomal protein uS13 family. As to quaternary structure, part of the 30S ribosomal subunit. Forms a loose heterodimer with protein S19. Forms two bridges to the 50S subunit in the 70S ribosome.

Its function is as follows. Located at the top of the head of the 30S subunit, it contacts several helices of the 16S rRNA. In the 70S ribosome it contacts the 23S rRNA (bridge B1a) and protein L5 of the 50S subunit (bridge B1b), connecting the 2 subunits; these bridges are implicated in subunit movement. Contacts the tRNAs in the A and P-sites. This chain is Small ribosomal subunit protein uS13, found in Macrococcus caseolyticus (strain JCSC5402) (Macrococcoides caseolyticum).